A 366-amino-acid chain; its full sequence is Aminomethyltransferase (366 aa).

It belongs to the GcvT family. The glycine cleavage system is composed of four proteins: P, T, L and H.

The enzyme catalyses N(6)-[(R)-S(8)-aminomethyldihydrolipoyl]-L-lysyl-[protein] + (6S)-5,6,7,8-tetrahydrofolate = N(6)-[(R)-dihydrolipoyl]-L-lysyl-[protein] + (6R)-5,10-methylene-5,6,7,8-tetrahydrofolate + NH4(+). Functionally, the glycine cleavage system catalyzes the degradation of glycine. This chain is Aminomethyltransferase, found in Neisseria meningitidis serogroup A / serotype 4A (strain DSM 15465 / Z2491).